The chain runs to 173 residues: Photosystem I assembly protein Ycf3 (173 aa).

TPR repeat units follow at residues 35–68, 72–105, and 120–153; these read AYVY…EDNP, GETL…NSNQ, and GRIA…NPGG.

Belongs to the Ycf3 family.

It is found in the cellular thylakoid membrane. Functionally, essential for the assembly of the photosystem I (PSI) complex. May act as a chaperone-like factor to guide the assembly of the PSI subunits. The protein is Photosystem I assembly protein Ycf3 of Parasynechococcus marenigrum (strain WH8102).